Reading from the N-terminus, the 593-residue chain is DNA topoisomerase I, mitochondrial (593 aa).

The transit peptide at 1–43 (MLLLWLRALCRRFQHVPRRVPSRQVSRGSKASRAGWGETSKSS) directs the protein to the mitochondrion. 3 interaction with DNA regions span residues 254 to 255 (KY), 317 to 322 (RTGNEK), and 414 to 416 (TAK). The 333-residue stretch at 261–593 (SSKPKGEMDW…FNQAGEDFEF (333 aa)) folds into the Topo IB-type catalytic domain. Residue Tyr551 is the O-(3'-phospho-DNA)-tyrosine intermediate of the active site.

The protein belongs to the type IB topoisomerase family. Ca(2+) is required as a cofactor. It depends on Mg(2+) as a cofactor.

Its subcellular location is the mitochondrion. It carries out the reaction ATP-independent breakage of single-stranded DNA, followed by passage and rejoining.. In terms of biological role, releases the supercoiling and torsional tension of DNA introduced during duplication of mitochondrial DNA by transiently cleaving and rejoining one strand of the DNA duplex. Introduces a single-strand break via transesterification at a target site in duplex DNA. The scissile phosphodiester is attacked by the catalytic tyrosine of the enzyme, resulting in the formation of a DNA-(3'-phosphotyrosyl)-enzyme intermediate and the expulsion of a 5'-OH DNA strand. The free DNA strand then rotates around the intact phosphodiester bond on the opposing strand, thus removing DNA supercoils. Finally, in the religation step, the DNA 5'-OH attacks the covalent intermediate to expel the active-site tyrosine and restore the DNA phosphodiester backbone. The protein is DNA topoisomerase I, mitochondrial (Top1mt) of Rattus norvegicus (Rat).